Here is a 55-residue protein sequence, read N- to C-terminus: Large ribosomal subunit protein bL33 (55 aa).

It belongs to the bacterial ribosomal protein bL33 family.

The polypeptide is Large ribosomal subunit protein bL33 (Agrobacterium fabrum (strain C58 / ATCC 33970) (Agrobacterium tumefaciens (strain C58))).